The primary structure comprises 164 residues: Translation initiation factor IF-3 (164 aa).

It belongs to the IF-3 family. In terms of assembly, monomer.

It localises to the cytoplasm. IF-3 binds to the 30S ribosomal subunit and shifts the equilibrium between 70S ribosomes and their 50S and 30S subunits in favor of the free subunits, thus enhancing the availability of 30S subunits on which protein synthesis initiation begins. The protein is Translation initiation factor IF-3 of Bordetella bronchiseptica (strain ATCC BAA-588 / NCTC 13252 / RB50) (Alcaligenes bronchisepticus).